The sequence spans 932 residues: Receptor-like protein 9a (932 aa).

Residues Met-1–Cys-28 form the signal peptide. Residues Ile-29–Thr-888 are Extracellular-facing. N-linked (GlcNAc...) asparagine glycans are attached at residues Asn-53, Asn-80, and Asn-90. LRR repeat units follow at residues Phe-97–Ser-122, Leu-126–Ser-152, Arg-154–Asp-174, Leu-175–Lys-200, His-202–Gln-222, Leu-223–Ser-246, Leu-247–Ser-273, Glu-275–Asn-295, Leu-296–Gln-320, Lys-322–Gln-345, Lys-346–Glu-368, Tyr-370–Val-393, His-394–Val-417, Leu-418–Glu-441, Lys-443–Gly-466, Ser-468–Leu-491, Glu-492–Ser-514, Gly-516–Phe-535, Gly-536–Asn-560, Val-561–Phe-583, His-585–Leu-605, Glu-606–Arg-629, Phe-631–Leu-652, Lys-653–Val-676, Phe-745–Phe-769, Gln-770–Asn-792, Thr-794–Leu-817, and Tyr-819–Ser-842. The N-linked (GlcNAc...) asparagine glycan is linked to Asn-140. Asn-261 and Asn-295 each carry an N-linked (GlcNAc...) asparagine glycan. N-linked (GlcNAc...) asparagine glycans are attached at residues Asn-352 and Asn-380. N-linked (GlcNAc...) asparagine glycosylation is found at Asn-420, Asn-425, and Asn-454. 3 N-linked (GlcNAc...) asparagine glycosylation sites follow: Asn-524, Asn-551, and Asn-560. 2 N-linked (GlcNAc...) asparagine glycosylation sites follow: Asn-666 and Asn-675. Residues Asn-776 and Asn-792 are each glycosylated (N-linked (GlcNAc...) asparagine). Asn-824, Asn-829, Asn-860, and Asn-866 each carry an N-linked (GlcNAc...) asparagine glycan. The helical transmembrane segment at Phe-889–Cys-909 threads the bilayer. The Cytoplasmic segment spans residues Phe-910 to Val-932.

This sequence belongs to the RLP family.

The protein resides in the cell membrane. The protein is Receptor-like protein 9a of Arabidopsis thaliana (Mouse-ear cress).